Here is a 196-residue protein sequence, read N- to C-terminus: V-type proton ATPase proteolipid subunit (196 aa).

Residues 1–25 (MFQLLSFLLSGEATAVERIITDACP) lie on the Lumenal side of the membrane. A helical transmembrane segment spans residues 26 to 46 (VYAPFFGAMGVTAALVFTVMG). The Cytoplasmic segment spans residues 47-72 (AAYGTAKASVGISNMGVMKPDLVIKA). A helical transmembrane segment spans residues 73–93 (FIPVIFAGVIAIYGLIICVIL). At 94-111 (VGGIKPNANYTLMKSFTD) the chain is on the lumenal side. The helical transmembrane segment at 112-132 (LGAGLTVGLCGLAAGMAIGIV) threads the bilayer. Over 133 to 150 (GDSGVRAFGQQPKLYVIM) the chain is Cytoplasmic. The chain crosses the membrane as a helical span at residues 151-171 (MLILIFSEALGLYGLIIGILL). Topologically, residues 172–196 (SSVSDTYCPGQALVPLNSGNVIGKN) are lumenal.

The protein belongs to the V-ATPase proteolipid subunit family. In terms of assembly, V-ATPase is a heteromultimeric enzyme composed of a peripheral catalytic V1 complex (main components: subunits A, B, C, D, E, and F) attached to an integral membrane V0 proton pore complex (main component: the proteolipid protein; which is present as a hexamer that forms the proton-conducting pore).

Its subcellular location is the vacuole membrane. Proton-conducting pore forming subunit of the membrane integral V0 complex of vacuolar ATPase. V-ATPase is responsible for acidifying a variety of intracellular compartments in eukaryotic cells. The polypeptide is V-type proton ATPase proteolipid subunit (vatP) (Dictyostelium discoideum (Social amoeba)).